Here is a 376-residue protein sequence, read N- to C-terminus: Chaperone protein DnaJ (376 aa).

One can recognise a J domain in the interval 4–68; sequence DYYEILGVAR…ETRARYDRFG (65 aa). The interval 102–121 is disordered; sequence GGMGGPTQQRRRGGPARGDD. The segment at 136-218 adopts a CR-type zinc-finger fold; that stretch reads GGEKEIRISH…CDGKGTNQVT (83 aa). Residues cysteine 149, cysteine 152, cysteine 166, cysteine 169, cysteine 192, cysteine 195, cysteine 206, and cysteine 209 each contribute to the Zn(2+) site. CXXCXGXG motif repeat units follow at residues 149 to 156, 166 to 173, 192 to 199, and 206 to 213; these read CETCSGSG, CSTCSGSG, CPTCNGTG, and CDACDGKG.

This sequence belongs to the DnaJ family. As to quaternary structure, homodimer. Zn(2+) is required as a cofactor.

It is found in the cytoplasm. Functionally, participates actively in the response to hyperosmotic and heat shock by preventing the aggregation of stress-denatured proteins and by disaggregating proteins, also in an autonomous, DnaK-independent fashion. Unfolded proteins bind initially to DnaJ; upon interaction with the DnaJ-bound protein, DnaK hydrolyzes its bound ATP, resulting in the formation of a stable complex. GrpE releases ADP from DnaK; ATP binding to DnaK triggers the release of the substrate protein, thus completing the reaction cycle. Several rounds of ATP-dependent interactions between DnaJ, DnaK and GrpE are required for fully efficient folding. Also involved, together with DnaK and GrpE, in the DNA replication of plasmids through activation of initiation proteins. The polypeptide is Chaperone protein DnaJ (Trichormus variabilis (strain ATCC 29413 / PCC 7937) (Anabaena variabilis)).